A 457-amino-acid polypeptide reads, in one-letter code: tRNA modification GTPase MnmE (457 aa).

Residues R22, E83, and R122 each coordinate (6S)-5-formyl-5,6,7,8-tetrahydrofolate. Residues 219–378 (GLATAIIGRP…LEEAIKALFF (160 aa)) enclose the TrmE-type G domain. N229 is a binding site for K(+). GTP-binding positions include 229–234 (NVGKSS), 248–254 (TDIAGTT), and 273–276 (DTAG). S233 is a binding site for Mg(2+). Residues T248, I250, and T253 each contribute to the K(+) site. T254 contributes to the Mg(2+) binding site. K457 contributes to the (6S)-5-formyl-5,6,7,8-tetrahydrofolate binding site.

Belongs to the TRAFAC class TrmE-Era-EngA-EngB-Septin-like GTPase superfamily. TrmE GTPase family. As to quaternary structure, homodimer. Heterotetramer of two MnmE and two MnmG subunits. It depends on K(+) as a cofactor.

Its subcellular location is the cytoplasm. Its function is as follows. Exhibits a very high intrinsic GTPase hydrolysis rate. Involved in the addition of a carboxymethylaminomethyl (cmnm) group at the wobble position (U34) of certain tRNAs, forming tRNA-cmnm(5)s(2)U34. The sequence is that of tRNA modification GTPase MnmE from Listeria innocua serovar 6a (strain ATCC BAA-680 / CLIP 11262).